Consider the following 606-residue polypeptide: Lysosomal cobalamin transporter ABCD4 (606 aa).

Residues N39–T332 form the ABC transmembrane type-1 domain. A run of 5 helical transmembrane segments spans residues F43–I63, L76–L96, I190–M210, Y279–G299, and A314–L334. The 215-residue stretch at L389–I603 folds into the ABC transporter domain. G421–T428 contacts ATP.

This sequence belongs to the ABC transporter superfamily. ABCD family. Peroxisomal fatty acyl CoA transporter (TC 3.A.1.203) subfamily. Homodimer or heterodimer. Interacts with LMBRD1; this interaction induces the translocation of ABCD4 from the ER to the lysosome membrane. Interacts with LMBRD1 and MMACHC; this interaction ensures the transport of cobalamin from the lysosome to the cytosol. Ubiquitous.

The protein localises to the endoplasmic reticulum membrane. It localises to the lysosome membrane. It carries out the reaction an R-cob(III)alamin(out) + ATP + H2O = an R-cob(III)alamin(in) + ADP + phosphate + H(+). Its function is as follows. Lysosomal membrane protein that transports cobalamin (Vitamin B12) from the lysosomal lumen to the cytosol in an ATP-dependent manner. Targeted by LMBRD1 lysosomal chaperone from the endoplasmic reticulum to the lysosomal membrane. Then forms a complex with lysosomal chaperone LMBRD1 and cytosolic MMACHC to transport cobalamin across the lysosomal membrane. This chain is Lysosomal cobalamin transporter ABCD4, found in Homo sapiens (Human).